We begin with the raw amino-acid sequence, 131 residues long: ATP synthase epsilon chain (131 aa).

This sequence belongs to the ATPase epsilon chain family. In terms of assembly, F-type ATPases have 2 components, CF(1) - the catalytic core - and CF(0) - the membrane proton channel. CF(1) has five subunits: alpha(3), beta(3), gamma(1), delta(1), epsilon(1). CF(0) has three main subunits: a, b and c.

The protein localises to the cell inner membrane. Functionally, produces ATP from ADP in the presence of a proton gradient across the membrane. This Wolinella succinogenes (strain ATCC 29543 / DSM 1740 / CCUG 13145 / JCM 31913 / LMG 7466 / NCTC 11488 / FDC 602W) (Vibrio succinogenes) protein is ATP synthase epsilon chain.